Reading from the N-terminus, the 445-residue chain is Tubulin beta-2A chain (445 aa).

The MREI motif motif lies at 1–4; sequence MREI. A GTP-binding site is contributed by Gln11. Ser40 carries the post-translational modification Phosphoserine. Lys58 carries the N6-acetyllysine; alternate modification. Lys58 carries the N6-succinyllysine; alternate modification. Lys58 is covalently cross-linked (Glycyl lysine isopeptide (Lys-Gly) (interchain with G-Cter in ubiquitin); alternate). The GTP site is built by Glu69, Ser138, Gly142, Thr143, and Gly144. Glu69 is a Mg(2+) binding site. A Phosphoserine; by CDK1 modification is found at Ser172. Positions 204 and 226 each coordinate GTP. 2 positions are modified to phosphothreonine: Thr285 and Thr290. At Arg318 the chain carries Omega-N-methylarginine. A Glycyl lysine isopeptide (Lys-Gly) (interchain with G-Cter in ubiquitin) cross-link involves residue Lys324. The disordered stretch occupies residues 422–445; it reads YQQYQDATADEQGEFEEEEGEDEA. The span at 429 to 445 shows a compositional bias: acidic residues; it reads TADEQGEFEEEEGEDEA. Glu438 is subject to 5-glutamyl polyglutamate.

It belongs to the tubulin family. As to quaternary structure, interacts with ZNRF1. Part of a complex composed at least of ASH2L, EMSY, HCFC1, HSPA8, CCAR2, MATR3, MKI67, RBBP5, TUBB2A, WDR5 and ZNF335; this complex may have a histone H3-specific methyltransferase activity. Dimer of alpha and beta chains. A typical microtubule is a hollow water-filled tube with an outer diameter of 25 nm and an inner diameter of 15 nM. Alpha-beta heterodimers associate head-to-tail to form protofilaments running lengthwise along the microtubule wall with the beta-tubulin subunit facing the microtubule plus end conferring a structural polarity. Microtubules usually have 13 protofilaments but different protofilament numbers can be found in some organisms and specialized cells. Mg(2+) is required as a cofactor. Post-translationally, some glutamate residues at the C-terminus are polyglutamylated, resulting in polyglutamate chains on the gamma-carboxyl group. Polyglutamylation plays a key role in microtubule severing by spastin (SPAST). SPAST preferentially recognizes and acts on microtubules decorated with short polyglutamate tails: severing activity by SPAST increases as the number of glutamates per tubulin rises from one to eight, but decreases beyond this glutamylation threshold. Glutamylation is also involved in cilia motility. In terms of processing, some glutamate residues at the C-terminus are monoglycylated but not polyglycylated due to the absence of functional TTLL10 in human. Monoglycylation is mainly limited to tubulin incorporated into cilia and flagella axonemes, which is required for their stability and maintenance. Flagella glycylation controls sperm motility. Both polyglutamylation and monoglycylation can coexist on the same protein on adjacent residues, and lowering glycylation levels increases polyglutamylation, and reciprocally. Phosphorylated on Ser-172 by CDK1 during the cell cycle, from metaphase to telophase, but not in interphase. This phosphorylation inhibits tubulin incorporation into microtubules. In terms of tissue distribution, high expression in brain, where it represents 30% of all beta-tubulins.

Its subcellular location is the cytoplasm. The protein localises to the cytoskeleton. Its function is as follows. Tubulin is the major constituent of microtubules, a cylinder consisting of laterally associated linear protofilaments composed of alpha- and beta-tubulin heterodimers. Microtubules grow by the addition of GTP-tubulin dimers to the microtubule end, where a stabilizing cap forms. Below the cap, tubulin dimers are in GDP-bound state, owing to GTPase activity of alpha-tubulin. This chain is Tubulin beta-2A chain (TUBB2A), found in Homo sapiens (Human).